The sequence spans 157 residues: Transcription elongation factor GreA (157 aa).

Positions 46–67 (AEYHAARERQSFIEGRIKELED) form a coiled coil.

The protein belongs to the GreA/GreB family.

Its function is as follows. Necessary for efficient RNA polymerase transcription elongation past template-encoded arresting sites. The arresting sites in DNA have the property of trapping a certain fraction of elongating RNA polymerases that pass through, resulting in locked ternary complexes. Cleavage of the nascent transcript by cleavage factors such as GreA or GreB allows the resumption of elongation from the new 3'terminus. GreA releases sequences of 2 to 3 nucleotides. The sequence is that of Transcription elongation factor GreA from Rhodospirillum rubrum (strain ATCC 11170 / ATH 1.1.1 / DSM 467 / LMG 4362 / NCIMB 8255 / S1).